The primary structure comprises 355 residues: 5-formaminoimidazole-4-carboxamide-1-(beta)-D-ribofuranosyl 5'-monophosphate synthetase (355 aa).

Positions 27 and 94 each coordinate 5-amino-1-(5-phospho-beta-D-ribosyl)imidazole-4-carboxamide. The 232-residue stretch at 101 to 332 (TESFAELAVP…YSDMIEENLS (232 aa)) folds into the ATP-grasp domain. ATP-binding positions include 144–195 (PEKI…TRYY) and glutamate 225. Asparagine 254 contacts 5-amino-1-(5-phospho-beta-D-ribosyl)imidazole-4-carboxamide. Mg(2+)-binding residues include glutamate 292 and glutamate 305.

The protein belongs to the phosphohexose mutase family. Requires Mg(2+) as cofactor. Mn(2+) is required as a cofactor.

The enzyme catalyses 5-amino-1-(5-phospho-beta-D-ribosyl)imidazole-4-carboxamide + formate + ATP = 5-formamido-1-(5-phospho-D-ribosyl)imidazole-4-carboxamide + ADP + phosphate. It functions in the pathway purine metabolism; IMP biosynthesis via de novo pathway; 5-formamido-1-(5-phospho-D-ribosyl)imidazole-4-carboxamide from 5-amino-1-(5-phospho-D-ribosyl)imidazole-4-carboxamide (formate route): step 1/1. Its function is as follows. Catalyzes the ATP- and formate-dependent formylation of 5-aminoimidazole-4-carboxamide-1-beta-d-ribofuranosyl 5'-monophosphate (AICAR) to 5-formaminoimidazole-4-carboxamide-1-beta-d-ribofuranosyl 5'-monophosphate (FAICAR) in the absence of folates. The protein is 5-formaminoimidazole-4-carboxamide-1-(beta)-D-ribofuranosyl 5'-monophosphate synthetase of Methanococcoides burtonii (strain DSM 6242 / NBRC 107633 / OCM 468 / ACE-M).